The chain runs to 330 residues: Intraflagellar transport protein 46 homolog (330 aa).

Disordered stretches follow at residues 1–21 (MDRP…ATPR) and 55–112 (SIKT…EGVY). The span at 7–16 (ETVDIPDSED) shows a compositional bias: acidic residues. Over residues 68-79 (SSSEKLCDRGSS) the composition is skewed to basic and acidic residues. Residues 80–101 (DDDDDDDNDDDEDEDDDDDDEN) are compositionally biased toward acidic residues.

It belongs to the IFT46 family.

It is found in the cytoplasm. The protein localises to the cytoskeleton. Its subcellular location is the cilium basal body. It localises to the cell projection. The protein resides in the cilium. Functionally, forms part of a complex involved in intraflagellar transport (IFT), the bi-directional movement of particles required for the assembly, maintenance and functioning of primary cilia. The sequence is that of Intraflagellar transport protein 46 homolog from Schistosoma japonicum (Blood fluke).